We begin with the raw amino-acid sequence, 325 residues long: Ribonucleoside-diphosphate reductase subunit beta (325 aa).

The Fe cation site is built by Asp-73, Glu-104, and His-107. Residue Tyr-111 is part of the active site. Fe cation contacts are provided by Glu-164, Glu-198, and His-201.

This sequence belongs to the ribonucleoside diphosphate reductase small chain family. In terms of assembly, tetramer of two alpha and two beta subunits. Fe cation serves as cofactor.

It catalyses the reaction a 2'-deoxyribonucleoside 5'-diphosphate + [thioredoxin]-disulfide + H2O = a ribonucleoside 5'-diphosphate + [thioredoxin]-dithiol. In terms of biological role, provides the precursors necessary for DNA synthesis. Catalyzes the biosynthesis of deoxyribonucleotides from the corresponding ribonucleotides. The chain is Ribonucleoside-diphosphate reductase subunit beta (nrdF) from Mycobacterium leprae (strain TN).